A 539-amino-acid polypeptide reads, in one-letter code: O-phosphoserine--tRNA(Cys) ligase (539 aa).

Residues 188–190 (HMT), 233–235 (SAS), 275–276 (YY), and Asn-327 contribute to the substrate site.

Belongs to the class-II aminoacyl-tRNA synthetase family. O-phosphoseryl-tRNA(Cys) synthetase subfamily. In terms of assembly, homotetramer. Interacts with SepCysS.

It catalyses the reaction tRNA(Cys) + O-phospho-L-serine + ATP = O-phospho-L-seryl-tRNA(Cys) + AMP + diphosphate. Functionally, catalyzes the attachment of O-phosphoserine (Sep) to tRNA(Cys). The sequence is that of O-phosphoserine--tRNA(Cys) ligase from Methanosarcina mazei (strain ATCC BAA-159 / DSM 3647 / Goe1 / Go1 / JCM 11833 / OCM 88) (Methanosarcina frisia).